The chain runs to 77 residues: Large ribosomal subunit protein bL28 (77 aa).

Belongs to the bacterial ribosomal protein bL28 family.

The sequence is that of Large ribosomal subunit protein bL28 from Karelsulcia muelleri (strain GWSS) (Sulcia muelleri).